Here is a 118-residue protein sequence, read N- to C-terminus: Small ribosomal subunit protein uS13 (118 aa).

Residues 93 to 118 form a disordered region; sequence RGLPVRGQRTKTNARTRKGPRKPIRK.

The protein belongs to the universal ribosomal protein uS13 family. In terms of assembly, part of the 30S ribosomal subunit. Forms a loose heterodimer with protein S19. Forms two bridges to the 50S subunit in the 70S ribosome.

Its function is as follows. Located at the top of the head of the 30S subunit, it contacts several helices of the 16S rRNA. In the 70S ribosome it contacts the 23S rRNA (bridge B1a) and protein L5 of the 50S subunit (bridge B1b), connecting the 2 subunits; these bridges are implicated in subunit movement. Contacts the tRNAs in the A and P-sites. The polypeptide is Small ribosomal subunit protein uS13 (Pseudomonas fluorescens (strain Pf0-1)).